Consider the following 319-residue polypeptide: Cell surface A33 antigen (319 aa).

An N-terminal signal peptide occupies residues 1–21 (MVGKMWPVLWTLCAVRVTVDA). The 113-residue stretch at 22–134 (ISVETPQDVL…LEGNTKSRVR (113 aa)) folds into the Ig-like V-type domain. Residues 22-235 (ISVETPQDVL…VAVRSPSMNV (214 aa)) lie on the Extracellular side of the membrane. 3 disulfide bridges follow: Cys43/Cys117, Cys146/Cys222, and Cys162/Cys211. 3 N-linked (GlcNAc...) asparagine glycosylation sites follow: Asn112, Asn200, and Asn223. The Ig-like C2-type domain occupies 140 to 227 (PPSKPECGIE…GTQFCNITVA (88 aa)). A helical transmembrane segment spans residues 236-256 (ALYVGIAVGVVAALIIIGIII). At 257 to 319 (YCCCCRGKDD…GRESPDHLDQ (63 aa)) the chain is on the cytoplasmic side. 2 stretches are compositionally biased toward basic and acidic residues: residues 267-295 (NTEDKEDARPNREAYEEPPEQLRELSRER) and 303-319 (QEEQRSTGRESPDHLDQ). Residues 267–319 (NTEDKEDARPNREAYEEPPEQLRELSREREEEDDYRQEEQRSTGRESPDHLDQ) are disordered.

N-glycosylated, contains approximately 8 kDa of N-linked carbohydrate. Post-translationally, palmitoylated. As to expression, expressed in normal gastrointestinal epithelium and in 95% of colon cancers.

It localises to the membrane. In terms of biological role, may play a role in cell-cell recognition and signaling. This is Cell surface A33 antigen (GPA33) from Homo sapiens (Human).